A 1415-amino-acid chain; its full sequence is DNA-directed RNA polymerase subunit beta' (1415 aa).

C70, C72, C85, and C88 together coordinate Zn(2+). Residues D461, D463, and D465 each coordinate Mg(2+). Zn(2+) contacts are provided by C820, C894, C901, and C904. The segment at 1382–1415 (ERERAQAIADEEQSLFIEPPPVVQATTEGEGDNA) is disordered.

It belongs to the RNA polymerase beta' chain family. As to quaternary structure, the RNAP catalytic core consists of 2 alpha, 1 beta, 1 beta' and 1 omega subunit. When a sigma factor is associated with the core the holoenzyme is formed, which can initiate transcription. It depends on Mg(2+) as a cofactor. Zn(2+) serves as cofactor.

It catalyses the reaction RNA(n) + a ribonucleoside 5'-triphosphate = RNA(n+1) + diphosphate. In terms of biological role, DNA-dependent RNA polymerase catalyzes the transcription of DNA into RNA using the four ribonucleoside triphosphates as substrates. This is DNA-directed RNA polymerase subunit beta' from Cupriavidus pinatubonensis (strain JMP 134 / LMG 1197) (Cupriavidus necator (strain JMP 134)).